Consider the following 85-residue polypeptide: MKTLLLSLVVVTFVCLDLAHTRTCYSCTENICLQHEQCQDGQDVCYKRWNTTYLILTDVVRGCAKTCPTPIEEEEVYCCLKDNCN.

A signal peptide spans 1–21 (MKTLLLSLVVVTFVCLDLAHT). 5 disulfide bridges follow: Cys-24–Cys-45, Cys-27–Cys-32, Cys-38–Cys-63, Cys-67–Cys-78, and Cys-79–Cys-84.

The protein belongs to the three-finger toxin family. Ancestral subfamily. Expressed by the venom gland.

The protein resides in the secreted. The chain is Toxin 3FTx-Lei1 from Leioheterodon madagascariensis (Malagasy giant hognose snake).